The primary structure comprises 123 residues: Dormancy-associated protein homolog 4 (123 aa).

The tract at residues 7–86 is disordered; the sequence is LWDETVAGPT…NPGTPLTPGT (80 aa). Positions 30 to 46 are enriched in low complexity; the sequence is LSTVRSSPPSLSSDQVT. Polar residues-rich tracts occupy residues 47 to 58 and 71 to 80; these read RSIMVTKGNNNV and PTCSSSNPGT. Ser-74 carries the post-translational modification Phosphoserine.

It belongs to the DRM1/ARP family.

The polypeptide is Dormancy-associated protein homolog 4 (Arabidopsis thaliana (Mouse-ear cress)).